The primary structure comprises 198 residues: Holliday junction branch migration complex subunit RuvA (198 aa).

Residues 1–61 are domain I; the sequence is MYEYFEGIIQ…DNDQTLYGFE (61 aa). Residues 62–140 are domain II; that stretch reads GAADKRTFNQ…TDGQPAAAAI (79 aa). The tract at residues 141 to 145 is flexible linker; the sequence is APVAS. Positions 146–198 are domain III; sequence DVDSELADALAALVALGYPQRTVDGLTDTLKAFSAKTTDAYLREGLRLLSGKA.

It belongs to the RuvA family. In terms of assembly, homotetramer. Forms an RuvA(8)-RuvB(12)-Holliday junction (HJ) complex. HJ DNA is sandwiched between 2 RuvA tetramers; dsDNA enters through RuvA and exits via RuvB. An RuvB hexamer assembles on each DNA strand where it exits the tetramer. Each RuvB hexamer is contacted by two RuvA subunits (via domain III) on 2 adjacent RuvB subunits; this complex drives branch migration. In the full resolvosome a probable DNA-RuvA(4)-RuvB(12)-RuvC(2) complex forms which resolves the HJ.

The protein localises to the cytoplasm. Functionally, the RuvA-RuvB-RuvC complex processes Holliday junction (HJ) DNA during genetic recombination and DNA repair, while the RuvA-RuvB complex plays an important role in the rescue of blocked DNA replication forks via replication fork reversal (RFR). RuvA specifically binds to HJ cruciform DNA, conferring on it an open structure. The RuvB hexamer acts as an ATP-dependent pump, pulling dsDNA into and through the RuvAB complex. HJ branch migration allows RuvC to scan DNA until it finds its consensus sequence, where it cleaves and resolves the cruciform DNA. This chain is Holliday junction branch migration complex subunit RuvA, found in Lacticaseibacillus casei (strain BL23) (Lactobacillus casei).